Reading from the N-terminus, the 268-residue chain is MKFYRTLLLFFASSFAFANSDLMLLHTYNNQPIEGWVMSEKLDGVRGYWNGKQLLTRQGQRLSPPAYFIKDFPPFAIDGELFSERNHFEEISTITKSFKGDGWEKLKLYVFDVPDAEGNLFERLAKLKAHLLEHPTTYIEIIEQIPVKDKTHLYQFLAQVENLQGEGVVVRNPNAPYERKRSSQILKLKTARGEECTVIAHHKGKGQFENVMGALTCKNHRGEFKIGSGFNLNERENPPPIGSVITYKYRGITNSGKPRFATYWREKK.

Lysine 41 (N6-AMP-lysine intermediate) is an active-site residue. Phenylalanine 111, arginine 181, and lysine 187 together coordinate ATP.

The protein belongs to the ATP-dependent DNA ligase family. A divalent metal cation serves as cofactor.

The enzyme catalyses ATP + (deoxyribonucleotide)n-3'-hydroxyl + 5'-phospho-(deoxyribonucleotide)m = (deoxyribonucleotide)n+m + AMP + diphosphate.. Functionally, catalyzes efficient strand joining on a single nicked DNA. The chain is DNA ligase (ligA) from Haemophilus influenzae (strain ATCC 51907 / DSM 11121 / KW20 / Rd).